The chain runs to 422 residues: Interleukin-11 receptor subunit alpha (422 aa).

The first 22 residues, 1-22, serve as a signal peptide directing secretion; the sequence is MSSSCSGLSRVLVAVATALVSA. The Extracellular segment spans residues 24–370; that stretch reads SPCPQAWGPP…DSVEQVAVLA (347 aa). The region spanning 27 to 110 is the Ig-like C2-type domain; the sequence is PQAWGPPGVQ…LGGTVTLQLG (84 aa). 3 disulfide bridges follow: C48-C94, C120-C130, and C170-C180. 2 Fibronectin type-III domains span residues 112 to 219 and 220 to 317; these read PPAR…LRPD and PPQG…TPST. Residue N127 is glycosylated (N-linked (GlcNAc...) asparagine). N194 carries an N-linked (GlcNAc...) asparagine glycan. A WSXWS motif motif is present at residues 304-308; the sequence is WSTWS. Residues 335-355 are disordered; the sequence is EVEPQVDSPAPPRPSLQPHPR. Residues 371–391 traverse the membrane as a helical segment; that stretch reads SLGILSFLGLVAGALALGLWL. Residues 392 to 422 are Cytoplasmic-facing; it reads RLRRGGKDGSPKPGFLASVIPVDRRPGAPNL. Residues 398–422 are disordered; that stretch reads KDGSPKPGFLASVIPVDRRPGAPNL. Basic and acidic residues predominate over residues 413–422; it reads VDRRPGAPNL.

This sequence belongs to the type I cytokine receptor family. Type 3 subfamily. As to quaternary structure, on IL11 binding, forms a multimer complex with IL6ST/gp130. In terms of processing, a short soluble form is also released from the membrane by proteolysis. The sIL11RA is formed either by limited proteolysis of membrane-bound receptors, a process referred to as ectodomain shedding, or directly secreted from the cells after alternative mRNA splicing. mIL11RA is cleaved by the proteases ADAM10, ELANE and PRTN3. In terms of tissue distribution, expressed in a number of cell lines, including the myelogenous leukemia cell line K-562, the megakaryocytic leukemia cell line M-07e, the erythroleukemia cell line TF-1, and the osteosarcoma cell lines, MG-63 and SaOS-2. Also expressed in normal and malignant prostate epithelial cell lines. Expression levels are increased in prostate carcinoma.

It localises to the membrane. The protein localises to the secreted. Its function is as follows. Receptor for interleukin-11 (IL11). The receptor systems for IL6, LIF, OSM, CNTF, IL11 and CT1 can utilize IL6ST for initiating signal transmission. The IL11/IL11RA/IL6ST complex may be involved in the control of proliferation and/or differentiation of skeletogenic progenitor or other mesenchymal cells. Essential for the normal development of craniofacial bones and teeth. Restricts suture fusion and tooth number. Functionally, soluble form of IL11 receptor (sIL11RA) that acts as an agonist of IL11 activity. The IL11:sIL11RA complex binds to IL6ST/gp130 on cell surfaces and induces signaling also on cells that do not express membrane-bound IL11RA in a process called IL11 trans-signaling. This chain is Interleukin-11 receptor subunit alpha, found in Homo sapiens (Human).